Here is an 854-residue protein sequence, read N- to C-terminus: Glucans biosynthesis glucosyltransferase H (854 aa).

7 consecutive transmembrane segments (helical) span residues 155–175 (ILLV…KTIL), 209–229 (ILVL…TALM), 528–548 (VFLT…FLML), 583–603 (IALF…SVIL), 619–639 (FISL…RMLF), 671–691 (FVRH…MAWL), and 695–715 (FLWW…VSVY).

Belongs to the glycosyltransferase 2 family. OpgH subfamily.

Its subcellular location is the cell inner membrane. It participates in glycan metabolism; osmoregulated periplasmic glucan (OPG) biosynthesis. Its function is as follows. Involved in the biosynthesis of osmoregulated periplasmic glucans (OPGs). The chain is Glucans biosynthesis glucosyltransferase H from Pectobacterium carotovorum subsp. carotovorum (strain PC1).